Here is a 215-residue protein sequence, read N- to C-terminus: MEPAFHAALSRGLAALALPVAPEALPRLERFADRLLAWNRKVNLTTITDPAEVAEKHLVDSLLLLPLLDEVRTLLDLGSGAGLPGVPLACARPALEVTCCDSVAKKVAFVKAVAAELDLPVRAFAVRAEGDPEGEKLPRADAVVSRALSDPERWVPLGVRYLAPGGTLFAMLGREADEARLAAIGAASGLALVDVSRFELPLSRSARAIARWRAR.

Residues G78, L83, 128–129 (AE), and R146 contribute to the S-adenosyl-L-methionine site.

The protein belongs to the methyltransferase superfamily. RNA methyltransferase RsmG family.

The protein localises to the cytoplasm. The enzyme catalyses guanosine(527) in 16S rRNA + S-adenosyl-L-methionine = N(7)-methylguanosine(527) in 16S rRNA + S-adenosyl-L-homocysteine. Functionally, specifically methylates the N7 position of guanine in position 527 of 16S rRNA. The sequence is that of Ribosomal RNA small subunit methyltransferase G from Anaeromyxobacter sp. (strain Fw109-5).